The following is a 232-amino-acid chain: 5'-methylthioadenosine/S-adenosylhomocysteine nucleosidase (232 aa).

Glu14 functions as the Proton acceptor in the catalytic mechanism. Residues Gly80, Val154, and 175-176 (ME) each bind substrate. The active-site Proton donor is the Asp199.

The protein belongs to the PNP/UDP phosphorylase family. MtnN subfamily.

It carries out the reaction S-adenosyl-L-homocysteine + H2O = S-(5-deoxy-D-ribos-5-yl)-L-homocysteine + adenine. The enzyme catalyses S-methyl-5'-thioadenosine + H2O = 5-(methylsulfanyl)-D-ribose + adenine. It catalyses the reaction 5'-deoxyadenosine + H2O = 5-deoxy-D-ribose + adenine. Its pathway is amino-acid biosynthesis; L-methionine biosynthesis via salvage pathway; S-methyl-5-thio-alpha-D-ribose 1-phosphate from S-methyl-5'-thioadenosine (hydrolase route): step 1/2. Functionally, catalyzes the irreversible cleavage of the glycosidic bond in both 5'-methylthioadenosine (MTA) and S-adenosylhomocysteine (SAH/AdoHcy) to adenine and the corresponding thioribose, 5'-methylthioribose and S-ribosylhomocysteine, respectively. Also cleaves 5'-deoxyadenosine, a toxic by-product of radical S-adenosylmethionine (SAM) enzymes, into 5-deoxyribose and adenine. In Actinobacillus pleuropneumoniae serotype 3 (strain JL03), this protein is 5'-methylthioadenosine/S-adenosylhomocysteine nucleosidase.